Reading from the N-terminus, the 999-residue chain is Transcription-repair-coupling factor (999 aa).

Positions 499 to 656 constitute a Helicase ATP-binding domain; the sequence is DLSSHRVMDR…LSQIKGISSL (158 aa). 512-519 contributes to the ATP binding site; that stretch reads GDVGFGKT. The DEEH box motif lies at 609 to 612; it reads DEEH. Residues 677 to 833 enclose the Helicase C-terminal domain; sequence LLKEIIYREL…SVAYHDLEIR (157 aa).

It in the N-terminal section; belongs to the UvrB family. In the C-terminal section; belongs to the helicase family. RecG subfamily.

The protein localises to the cytoplasm. In terms of biological role, couples transcription and DNA repair by recognizing RNA polymerase (RNAP) stalled at DNA lesions. Mediates ATP-dependent release of RNAP and its truncated transcript from the DNA, and recruitment of nucleotide excision repair machinery to the damaged site. In Helicobacter pylori (strain ATCC 700392 / 26695) (Campylobacter pylori), this protein is Transcription-repair-coupling factor.